Here is a 523-residue protein sequence, read N- to C-terminus: Butyrophilin subfamily 2 member A2 (523 aa).

A signal peptide spans 1–32 (MEPAAALHFSLPASLLLLLLLLLLSLCALVSA). Topologically, residues 33-265 (QFTVVGPANP…AVILTASPWM (233 aa)) are extracellular. Residues 34–145 (FTVVGPANPI…SYDEAILRLV (112 aa)) enclose the Ig-like V-type domain. Asparagine 50, asparagine 118, asparagine 220, and asparagine 226 each carry an N-linked (GlcNAc...) asparagine glycan. A disulfide bridge connects residues cysteine 55 and cysteine 129. The Ig-like C2-type domain maps to 153–234 (PLIEIKAQED…VNNTLLGQEK (82 aa)). A helical transmembrane segment spans residues 266-286 (VSMTVILAVFIIFMAVSICCI). Residues 286–321 (IKKLQREKKILSGEKKVEQEEKEIAQQLQEELRWRR) adopt a coiled-coil conformation. At 287 to 523 (KKLQREKKIL…LHRVGTHQSL (237 aa)) the chain is on the cytoplasmic side. The B30.2/SPRY domain occupies 309 to 502 (IAQQLQEELR…IFICPALTGA (194 aa)).

It belongs to the immunoglobulin superfamily. BTN/MOG family. N-glycosylated. Highly expressed in brain, bone marrow, small intestine, muscle, spleen and pancreas. Moderate expression was seen in lung, liver and kidney.

The protein localises to the membrane. In terms of biological role, inhibits the proliferation of CD4 and CD8 T-cells activated by anti-CD3 antibodies, T-cell metabolism and IL2 and IFNG secretion. The sequence is that of Butyrophilin subfamily 2 member A2 (BTN2A2) from Homo sapiens (Human).